The primary structure comprises 96 residues: ATP-dependent Clp protease adapter protein ClpS (96 aa).

Belongs to the ClpS family. In terms of assembly, binds to the N-terminal domain of the chaperone ClpA.

Involved in the modulation of the specificity of the ClpAP-mediated ATP-dependent protein degradation. The sequence is that of ATP-dependent Clp protease adapter protein ClpS from Streptomyces coelicolor (strain ATCC BAA-471 / A3(2) / M145).